The primary structure comprises 152 residues: Cytochrome c oxidase subunit 5A, mitochondrial (152 aa).

The N-terminal 43 residues, 1-43 (MLGTALRRCAVAAAAASRAGPRGLLHPAPAPGPAAAIQSIRCY), are a transit peptide targeting the mitochondrion. Positions 2-22 (LGTALRRCAVAAAAASRAGPR) match the SIFI-degron motif. N6-acetyllysine is present on residues Lys89 and Lys115. Thr143 carries the phosphothreonine modification.

It belongs to the cytochrome c oxidase subunit 5A family. Component of the cytochrome c oxidase (complex IV, CIV), a multisubunit enzyme composed of 14 subunits. The complex is composed of a catalytic core of 3 subunits MT-CO1, MT-CO2 and MT-CO3, encoded in the mitochondrial DNA, and 11 supernumerary subunits COX4I, COX5A, COX5B, COX6A, COX6B, COX6C, COX7A, COX7B, COX7C, COX8 and NDUFA4, which are encoded in the nuclear genome. The complex exists as a monomer or a dimer and forms supercomplexes (SCs) in the inner mitochondrial membrane with NADH-ubiquinone oxidoreductase (complex I, CI) and ubiquinol-cytochrome c oxidoreductase (cytochrome b-c1 complex, complex III, CIII), resulting in different assemblies (supercomplex SCI(1)III(2)IV(1) and megacomplex MCI(2)III(2)IV(2)). Interacts with AFG1L. Interacts with RAB5IF. In response to mitochondrial stress, the precursor protein is ubiquitinated by the SIFI complex in the cytoplasm before mitochondrial import, leading to its degradation. Within the SIFI complex, UBR4 initiates ubiquitin chain that are further elongated or branched by KCMF1.

The protein localises to the mitochondrion inner membrane. It functions in the pathway energy metabolism; oxidative phosphorylation. Component of the cytochrome c oxidase, the last enzyme in the mitochondrial electron transport chain which drives oxidative phosphorylation. The respiratory chain contains 3 multisubunit complexes succinate dehydrogenase (complex II, CII), ubiquinol-cytochrome c oxidoreductase (cytochrome b-c1 complex, complex III, CIII) and cytochrome c oxidase (complex IV, CIV), that cooperate to transfer electrons derived from NADH and succinate to molecular oxygen, creating an electrochemical gradient over the inner membrane that drives transmembrane transport and the ATP synthase. Cytochrome c oxidase is the component of the respiratory chain that catalyzes the reduction of oxygen to water. Electrons originating from reduced cytochrome c in the intermembrane space (IMS) are transferred via the dinuclear copper A center (CU(A)) of subunit 2 and heme A of subunit 1 to the active site in subunit 1, a binuclear center (BNC) formed by heme A3 and copper B (CU(B)). The BNC reduces molecular oxygen to 2 water molecules using 4 electrons from cytochrome c in the IMS and 4 protons from the mitochondrial matrix. The protein is Cytochrome c oxidase subunit 5A, mitochondrial (COX5A) of Eulemur fulvus fulvus (Brown lemur).